Consider the following 889-residue polypeptide: 97 kDa heat shock protein (889 aa).

Disordered regions lie at residues 504–622 (EDAM…ATTD) and 812–889 (FVCD…MELD). Over residues 549–585 (SADKEEQADNGSKETSKDSKDQTSESSKSDKESKDQN) the composition is skewed to basic and acidic residues. Positions 586 to 597 (SEGSKSDNSSTE) are enriched in polar residues. The span at 869 to 889 (ASKEGETKPDETKPDVEMELD) shows a compositional bias: basic and acidic residues.

It belongs to the heat shock protein 70 family.

Its function is as follows. Cell surface recognition protein that binds acrosome-reacted sperm and thereby mediates binding and subsequent fusion of the sperm and egg. The polypeptide is 97 kDa heat shock protein (Strongylocentrotus purpuratus (Purple sea urchin)).